Reading from the N-terminus, the 86-residue chain is UPF0457 protein SERP1772 (86 aa).

Belongs to the UPF0457 family.

The protein is UPF0457 protein SERP1772 of Staphylococcus epidermidis (strain ATCC 35984 / DSM 28319 / BCRC 17069 / CCUG 31568 / BM 3577 / RP62A).